Here is a 179-residue protein sequence, read N- to C-terminus: Large ribosomal subunit protein uL5 (179 aa).

It belongs to the universal ribosomal protein uL5 family. In terms of assembly, part of the 50S ribosomal subunit; part of the 5S rRNA/L5/L18/L25 subcomplex. Contacts the 5S rRNA and the P site tRNA. Forms a bridge to the 30S subunit in the 70S ribosome.

Its function is as follows. This is one of the proteins that bind and probably mediate the attachment of the 5S RNA into the large ribosomal subunit, where it forms part of the central protuberance. In the 70S ribosome it contacts protein S13 of the 30S subunit (bridge B1b), connecting the 2 subunits; this bridge is implicated in subunit movement. Contacts the P site tRNA; the 5S rRNA and some of its associated proteins might help stabilize positioning of ribosome-bound tRNAs. In Vibrio vulnificus (strain CMCP6), this protein is Large ribosomal subunit protein uL5.